We begin with the raw amino-acid sequence, 174 residues long: Inactive protein RESTRICTED TEV MOVEMENT 1 (174 aa).

The region spanning 1-152 is the Jacalin-type lectin domain; that stretch reads MKIGPVGKHD…LQYIGVYLRP (152 aa).

This sequence belongs to the jacalin lectin family. As to quaternary structure, self-interacts. Interacts with RTM3.

It localises to the cytoplasm. In terms of biological role, unable to mediate restriction of long-distance movement of the pathogenic tobacco etch virus (TEV) without causing a hypersensitive response or inducing systemic acquired resistance. In Arabidopsis thaliana (Mouse-ear cress), this protein is Inactive protein RESTRICTED TEV MOVEMENT 1 (RTM1).